Reading from the N-terminus, the 411-residue chain is Imidazolonepropionase (411 aa).

Positions 75 and 77 each coordinate Fe(3+). His75 and His77 together coordinate Zn(2+). 4-imidazolone-5-propanoate is bound by residues Arg84, Tyr147, and His180. An N-formimidoyl-L-glutamate-binding site is contributed by Tyr147. Position 245 (His245) interacts with Fe(3+). His245 contributes to the Zn(2+) binding site. Gln248 lines the 4-imidazolone-5-propanoate pocket. Position 320 (Asp320) interacts with Fe(3+). Zn(2+) is bound at residue Asp320. 2 residues coordinate N-formimidoyl-L-glutamate: Asn322 and Gly324. Position 325 (Thr325) interacts with 4-imidazolone-5-propanoate.

This sequence belongs to the metallo-dependent hydrolases superfamily. HutI family. The cofactor is Zn(2+). Fe(3+) serves as cofactor.

It localises to the cytoplasm. It carries out the reaction 4-imidazolone-5-propanoate + H2O = N-formimidoyl-L-glutamate. It participates in amino-acid degradation; L-histidine degradation into L-glutamate; N-formimidoyl-L-glutamate from L-histidine: step 3/3. In terms of biological role, catalyzes the hydrolytic cleavage of the carbon-nitrogen bond in imidazolone-5-propanoate to yield N-formimidoyl-L-glutamate. It is the third step in the universal histidine degradation pathway. This Aeromonas salmonicida (strain A449) protein is Imidazolonepropionase.